A 1051-amino-acid polypeptide reads, in one-letter code: Probable valine--tRNA ligase, mitochondrial (1051 aa).

The N-terminal 20 residues, 1–20 (MNKLLFLSKKSSTSNLYRFY), are a transit peptide targeting the mitochondrion. The short motif at 71 to 81 (PNVTGSLHIGH) is the 'HIGH' region element. A 'KMSKS' region motif is present at residues 606-610 (KMSKS). Lys609 contacts ATP. The stretch at 972–1019 (KELQISIEFDKEINNQLNQKLINPNQSNDKKILKLENFIKQLQDEIDN) forms a coiled coil.

This sequence belongs to the class-I aminoacyl-tRNA synthetase family.

It localises to the mitochondrion. It catalyses the reaction tRNA(Val) + L-valine + ATP = L-valyl-tRNA(Val) + AMP + diphosphate. The polypeptide is Probable valine--tRNA ligase, mitochondrial (valS2) (Dictyostelium discoideum (Social amoeba)).